The sequence spans 349 residues: Phosphoribosylformylglycinamidine cyclo-ligase (349 aa).

The protein belongs to the AIR synthase family.

It is found in the cytoplasm. It carries out the reaction 2-formamido-N(1)-(5-O-phospho-beta-D-ribosyl)acetamidine + ATP = 5-amino-1-(5-phospho-beta-D-ribosyl)imidazole + ADP + phosphate + H(+). It functions in the pathway purine metabolism; IMP biosynthesis via de novo pathway; 5-amino-1-(5-phospho-D-ribosyl)imidazole from N(2)-formyl-N(1)-(5-phospho-D-ribosyl)glycinamide: step 2/2. In Trichlorobacter lovleyi (strain ATCC BAA-1151 / DSM 17278 / SZ) (Geobacter lovleyi), this protein is Phosphoribosylformylglycinamidine cyclo-ligase.